We begin with the raw amino-acid sequence, 836 residues long: Zinc fingers and homeoboxes protein 2 (836 aa).

The tract at residues Met-1 to Val-61 is disordered. Polar residues predominate over residues Thr-8–Leu-19. The tract at residues Ala-27–Gly-77 is interaction with EFNB1. Residues Glu-50–Val-61 are compositionally biased toward basic and acidic residues. Residue Lys-64 forms a Glycyl lysine isopeptide (Lys-Gly) (interchain with G-Cter in SUMO2) linkage. 2 consecutive C2H2-type zinc fingers follow at residues Tyr-78 to His-101 and Tyr-110 to His-133. Residues Pro-164 to Gly-214 are disordered. Over residues Leu-192 to Gly-214 the composition is skewed to basic and acidic residues. The segment at Asp-195–Ser-358 is required for homodimerization. 4 DNA-binding regions (homeobox) span residues Asn-263–Glu-324, Thr-439–Ile-501, Pro-530–Val-591, and Ser-628–Trp-690. Residues Asn-263–Lys-446 are required for repressor activity. A required for interaction with NFYA region spans residues Asn-263–Gly-497. The tract at residues His-317–Lys-446 is required for nuclear localization. The tract at residues Gly-404 to Ser-442 is disordered. Lys-455 is covalently cross-linked (Glycyl lysine isopeptide (Lys-Gly) (interchain with G-Cter in SUMO2)). Composition is skewed to basic and acidic residues over residues Met-699–Ser-709, Tyr-730–Val-746, and Arg-813–Ser-824. Residues Met-699–Ala-836 form a disordered region. 2 positions are modified to phosphoserine: Ser-824 and Ser-826.

It belongs to the ZHX family. Homodimer (via homeobox domain 1). Heterodimer with ZHX1 (via homeobox domain 1). Heterodimer with ZHX3 (via homeobox domain 1). Heterodimerization with ZHX1 is not necessary for repressor activity. Interacts (via homeobox domain) with NFYA (via N-terminus). Interacts with EFNB1 intracellular domain peptide; the interaction enhances ZHX2 transcriptional repression activity. Expressed in retina where it localizes to Muller glial cells of the inner nuclear layer (at protein level). Detected in heart, brain, spleen, lung, liver, skeletal muscle, kidney and testis.

Its subcellular location is the nucleus. Functionally, acts as a transcriptional repressor. Represses the promoter activity of the CDC25C gene stimulated by NFYA. May play a role in retinal development where it regulates the composition of bipolar cell populations, by promoting differentiation of bipolar OFF-type cells. In the brain, may promote maintenance and suppress differentiation of neural progenitor cells in the developing cortex. This chain is Zinc fingers and homeoboxes protein 2 (Zhx2), found in Mus musculus (Mouse).